The sequence spans 311 residues: Probable porphobilinogen deaminase (311 aa).

Position 237 is an S-(dipyrrolylmethanemethyl)cysteine (Cys-237). Residues Ser-270 to Leu-289 form a disordered region.

The protein belongs to the HMBS family. It depends on dipyrromethane as a cofactor.

The enzyme catalyses 4 porphobilinogen + H2O = hydroxymethylbilane + 4 NH4(+). It functions in the pathway porphyrin-containing compound metabolism; protoporphyrin-IX biosynthesis; coproporphyrinogen-III from 5-aminolevulinate: step 2/4. Functionally, tetrapolymerization of the monopyrrole PBG into the hydroxymethylbilane pre-uroporphyrinogen in several discrete steps. The chain is Probable porphobilinogen deaminase from Nitrosopumilus maritimus (strain SCM1).